Here is a 196-residue protein sequence, read N- to C-terminus: dITP/XTP pyrophosphatase (196 aa).

10–15 (TTNPHK) is a substrate binding site. Asp68 acts as the Proton acceptor in catalysis. Asp68 contacts Mg(2+). Substrate is bound by residues Ser69, 148 to 151 (FGYD), and 175 to 176 (HR).

The protein belongs to the HAM1 NTPase family. As to quaternary structure, homodimer. It depends on Mg(2+) as a cofactor.

It carries out the reaction XTP + H2O = XMP + diphosphate + H(+). The enzyme catalyses dITP + H2O = dIMP + diphosphate + H(+). The catalysed reaction is ITP + H2O = IMP + diphosphate + H(+). Pyrophosphatase that catalyzes the hydrolysis of nucleoside triphosphates to their monophosphate derivatives, with a high preference for the non-canonical purine nucleotides XTP (xanthosine triphosphate), dITP (deoxyinosine triphosphate) and ITP. Seems to function as a house-cleaning enzyme that removes non-canonical purine nucleotides from the nucleotide pool, thus preventing their incorporation into DNA/RNA and avoiding chromosomal lesions. The sequence is that of dITP/XTP pyrophosphatase from Thermotoga maritima (strain ATCC 43589 / DSM 3109 / JCM 10099 / NBRC 100826 / MSB8).